A 108-amino-acid chain; its full sequence is Transcriptional activator HlyU (108 aa).

The 95-residue stretch at 13–107 folds into the HTH arsR-type domain; it reads EMEKNSAKAV…LLHRLYCQAN (95 aa). The H-T-H motif DNA-binding region spans 47–66; sequence VGELSSRLELSQSALSQHLA.

Up-regulates the expression of the hemolysin gene, hlyA, and may promote expression of other virulence determinants in vivo. It may have both positive and negative regulator activities. The chain is Transcriptional activator HlyU (hlyU) from Vibrio cholerae serotype O1 (strain ATCC 39315 / El Tor Inaba N16961).